The chain runs to 362 residues: Cobalt-precorrin-5B C(1)-methyltransferase (362 aa).

Belongs to the CbiD family.

The catalysed reaction is Co-precorrin-5B + S-adenosyl-L-methionine = Co-precorrin-6A + S-adenosyl-L-homocysteine. It participates in cofactor biosynthesis; adenosylcobalamin biosynthesis; cob(II)yrinate a,c-diamide from sirohydrochlorin (anaerobic route): step 6/10. Functionally, catalyzes the methylation of C-1 in cobalt-precorrin-5B to form cobalt-precorrin-6A. This is Cobalt-precorrin-5B C(1)-methyltransferase from Burkholderia ambifaria (strain MC40-6).